The primary structure comprises 216 residues: ATP synthase subunit C lysine N-methyltransferase (216 aa).

An N-acetylmethionine modification is found at M1. Basic and acidic residues predominate over residues M1 to Q12. The disordered stretch occupies residues M1 to S25. Residues W31–T50 form a helical membrane-spanning segment. A required for mitochondrial location region spans residues T51–G85.

It belongs to the ANT/ATPSC lysine N-methyltransferase family.

The protein resides in the mitochondrion membrane. It catalyses the reaction L-lysyl-[protein] + 3 S-adenosyl-L-methionine = N(6),N(6),N(6)-trimethyl-L-lysyl-[protein] + 3 S-adenosyl-L-homocysteine + 3 H(+). Functionally, mitochondrial protein-lysine N-methyltransferase that trimethylates ATP synthase subunit C, ATP5MC1 and ATP5MC2. Trimethylation is required for proper incorporation of the C subunit into the ATP synthase complex and mitochondrial respiration. Promotes chronic pain. Involved in persistent inflammatory and neuropathic pain: methyltransferase activity in the mitochondria of sensory neurons promotes chronic pain via a pathway that depends on the production of reactive oxygen species (ROS) and on the engagement of spinal cord microglia. In Rattus norvegicus (Rat), this protein is ATP synthase subunit C lysine N-methyltransferase (Atpsckmt).